We begin with the raw amino-acid sequence, 189 residues long: Small ribosomal subunit protein uS4 (189 aa).

Residues 107-181 (RRLQTQVFKL…VKRRTLRKGD (75 aa)) form the S4 RNA-binding domain. A disordered region spans residues 161–189 (QSPYGGGRPGRVKRRTLRKGDGAGGDDEE).

It belongs to the universal ribosomal protein uS4 family. Component of the small ribosomal subunit. Part of the small subunit (SSU) processome, composed of more than 70 proteins and the RNA chaperone small nucleolar RNA (snoRNA) U3.

The protein localises to the cytoplasm. It is found in the nucleus. The protein resides in the nucleolus. Component of the small ribosomal subunit. The ribosome is a large ribonucleoprotein complex responsible for the synthesis of proteins in the cell. Part of the small subunit (SSU) processome, first precursor of the small eukaryotic ribosomal subunit. During the assembly of the SSU processome in the nucleolus, many ribosome biogenesis factors, an RNA chaperone and ribosomal proteins associate with the nascent pre-rRNA and work in concert to generate RNA folding, modifications, rearrangements and cleavage as well as targeted degradation of pre-ribosomal RNA by the RNA exosome. The protein is Small ribosomal subunit protein uS4 (rps-9) of Caenorhabditis elegans.